Consider the following 634-residue polypeptide: Probable potassium transport system protein Kup (634 aa).

12 consecutive transmembrane segments (helical) span residues 19–39 (AIGL…TSPL), 62–82 (VLSL…VIFV), 113–133 (FVVV…MITP), 150–170 (GLEH…FLIQ), 177–197 (IGIL…ALGV), 225–245 (IGVA…ALYA), 259–279 (WFLL…ATIL), 291–311 (LLAP…ATVI), 349–369 (IYIG…VLGF), 379–399 (YGVA…VVIW), 406–426 (LWLG…FFAA), and 431–451 (VIQG…LMST).

This sequence belongs to the HAK/KUP transporter (TC 2.A.72) family.

It is found in the cell inner membrane. The catalysed reaction is K(+)(in) + H(+)(in) = K(+)(out) + H(+)(out). In terms of biological role, transport of potassium into the cell. Likely operates as a K(+):H(+) symporter. The polypeptide is Probable potassium transport system protein Kup (Pseudomonas aeruginosa (strain UCBPP-PA14)).